A 164-amino-acid polypeptide reads, in one-letter code: Respiratory growth induced protein 2 (164 aa).

Belongs to the RGI1 family.

It is found in the cytoplasm. Its function is as follows. Involved in the control of energetic metabolism and significantly contribute to cell fitness, especially under respiratory growth conditions. The sequence is that of Respiratory growth induced protein 2 (RGI2) from Candida glabrata (strain ATCC 2001 / BCRC 20586 / JCM 3761 / NBRC 0622 / NRRL Y-65 / CBS 138) (Yeast).